The chain runs to 406 residues: MSFKSLIQDMRGELGSISRKGFDVRFGYGRSRSQRVVQDTSVPVDAFKQSCWASMPPELLRDVLMRIEQSEDTWPSRKNVVSCAGVCRNWREIVKEIVRVPELSSKLTFPISLKQPGPRGSLVQCYIMRNRSNQTYYLYLGLNQAASNDDGKFLLAAKRFRRPTCTDYIISLNCDDVSRGSNTYIGKLRSNFLGTKFTVYDAQPTNPGTQVTRTRSSRLLSLKQVSPRIPSGNYPVAHISYELNVLGSRGPRRMQCVMDAIPASAVEPGGTAPTQTELVHSNLDSFPSFSFFRSKSIRAESLPSGPSSAAQKEGLLVLKNKAPRWHEQLQCWCLNFNGRVTVASVKNFQLVAAPENGPAGPEHENVILQFGKVGKDVFTMDYQYPISAFQAFTICLSSFDTKIACE.

Positions 50–105 (SCWASMPPELLRDVLMRIEQSEDTWPSRKNVVSCAGVCRNWREIVKEIVRVPELSS) constitute an F-box domain.

Belongs to the TUB family. In terms of tissue distribution, ubiquitous at low levels. Not detected in mature siliques.

It localises to the cell membrane. The protein localises to the plastid. Its subcellular location is the nucleus. It is found in the nucleoplasm. The protein resides in the cytoplasm. Functionally, involved in abiotic stress signaling. Tethered to plasma membrane (PM) and probably bound to phosphatidylinositol 4,5-bisphosphate. Abiotic stresses (drought, salt, H(2)O(2)) trigger phospholipase C mediated PM dislogement and plastidial and nucleocytosolic relocation of TULP3. The polypeptide is Tubby-like F-box protein 3 (Arabidopsis thaliana (Mouse-ear cress)).